A 560-amino-acid chain; its full sequence is Putative transport protein PBPRA2420 (560 aa).

The next 5 membrane-spanning stretches (helical) occupy residues 5–25, 37–57, 66–86, 91–111, and 161–181; these read VASLLHQNDILLLFVVLAVGL, VGNSIGVLLTAILFGNAGFTF, FMLFIFCVGIEAGPNFFGIFF, HYLLLALVVLLSAIAITLAMT, and SLSVGYAMSYLMGLISLIFLA. RCK C-terminal domains are found at residues 203–292 and 293–377; these read RGIG…FRNG and KEVF…IGFI. 6 helical membrane-spanning segments follow: residues 386–406, 409–429, 452–472, 477–497, 506–526, and 539–559; these read LLAFCCFFIIGLLIGSITLAF, VAFGLGSAAGLLIAGITLGFL, LMVFMVGIGLSAGSNLFDSFA, MVLVTSLMVSVIPVVLAYLFG, ALLFGAIIGARTCAPAMDMIN, and AGTYAIANVLLTIAGTLIIIM.

The protein belongs to the AAE transporter (TC 2.A.81) family. YbjL subfamily.

It localises to the cell membrane. The chain is Putative transport protein PBPRA2420 from Photobacterium profundum (strain SS9).